A 326-amino-acid polypeptide reads, in one-letter code: Thiazole synthase (326 aa).

The Schiff-base intermediate with DXP role is filled by K168. Residues G229, A255 to G256, and N277 to T278 each bind 1-deoxy-D-xylulose 5-phosphate.

The protein belongs to the ThiG family. In terms of assembly, homotetramer. Forms heterodimers with either ThiH or ThiS.

It localises to the cytoplasm. The catalysed reaction is [ThiS sulfur-carrier protein]-C-terminal-Gly-aminoethanethioate + 2-iminoacetate + 1-deoxy-D-xylulose 5-phosphate = [ThiS sulfur-carrier protein]-C-terminal Gly-Gly + 2-[(2R,5Z)-2-carboxy-4-methylthiazol-5(2H)-ylidene]ethyl phosphate + 2 H2O + H(+). Its pathway is cofactor biosynthesis; thiamine diphosphate biosynthesis. Catalyzes the rearrangement of 1-deoxy-D-xylulose 5-phosphate (DXP) to produce the thiazole phosphate moiety of thiamine. Sulfur is provided by the thiocarboxylate moiety of the carrier protein ThiS. In vitro, sulfur can be provided by H(2)S. The chain is Thiazole synthase from Magnetococcus marinus (strain ATCC BAA-1437 / JCM 17883 / MC-1).